The chain runs to 176 residues: Glycine-rich RNA-binding protein 7 (176 aa).

Ala2 is modified (N-acetylalanine). Residues 2 to 41 (ASGDVEYRCFVGGLAWATDDRALETAFAQYGDVIDSKIIN) are required for RNA chaperone activity. In terms of domain architecture, RRM spans 8 to 86 (YRCFVGGLAW…RSITVNEAQS (79 aa)). Arg49 bears the ADP-ribosylarginine; by HopU1 mark. Positions 83–103 (EAQSRGSGGGGGHRGGGGGGY) are disordered. The segment covering 88–103 (GSGGGGGHRGGGGGGY) has biased composition (gly residues). Residues 88–175 (GSGGGGGHRG…GYGGSGGGGG (88 aa)) are glycine-rich (GR) required for cell-to-cell movement. Positions 97–148 (GGGGGGYRSGGGGGYSGGGGSYGGGGGRREGGGGYSGGGGGYSSRGGGGGSY) are nuclear targeting sequence (M9). Residues Ser105 and Ser117 each carry the phosphoserine modification. A disordered region spans residues 131-176 (YSGGGGGYSSRGGGGGSYGGGRREGGGGYGGGEGGGYGGSGGGGGW).

Belongs to the GR-RBP family. In terms of assembly, interacts with TRN1. Interacts with the Pseudomonas syringae type III effector HopU1. Binds to small phloem-mobile single-stranded RNAs (ss-sRNA, e.g. small interfering RNA (siRNA) and microRNA (miRNA)) in the phloeme exudate, including viral-derived sRNA (vsiRNA). In terms of processing, ADP-ribosylated by the Pseudomonas syringae type III effector HopU1. ADP-ribosylation reduces the ability of the protein to bind RNA. Ubiquitous with strong expression in guard cell.

The protein localises to the cytoplasm. Its subcellular location is the nucleus. It is found in the secreted. Its function is as follows. Plays a role in RNA transcription or processing during stress. Binds RNAs and DNAs sequence with a preference to single-stranded nucleic acids. Displays strong affinity to poly(U) and poly(G) sequence. Involved in mRNA alternative splicing of numerous targets by modulating splice site selection. Negatively regulates the circadian oscillations of its own transcript as well as RBG8 transcript. Forms an interlocked post-transcriptional negative feedback loop with the RBG8 autoregulatory circuit. Both proteins negatively autoregulate and reciprocally crossregulate by binding to their pre-mRNAs and promoting unproductive splicing coupled to degradation via the NMD pathway. Involved in the regulation of abscisic acid and stress responses. Affects the growth and stress tolerance under high salt and dehydration stress conditions, and also confers freezing tolerance, particularly via the regulation of stomatal opening and closing in the guard cells. Exhibits RNA chaperone activity during the cold adaptation process. Involved in the export of mRNAs from the nucleus to the cytoplasm under cold stress conditions. Target of the Pseudomonas syringae type III effector HopU1, which could probably be involved in plant innate immunity. Component of the flowering autonomous pathway which promotes floral transition, at least partly by down-regulating FLC. Mediates cell-to-cell trafficking of RNA interference (RNAi) signals (small RNAs (sRNA), e.g. small interfering RNA (siRNA) and microRNA (miRNA)) which regulate growth and development, as well as responses to environmental inputs, including pathogen attack; can compromise zucchini yellow mosaic virus (ZYMV) and tobacco rattle virus (TRV) infections at the early stage. In Arabidopsis thaliana (Mouse-ear cress), this protein is Glycine-rich RNA-binding protein 7.